Consider the following 241-residue polypeptide: MLSSTAMYSAPGRDLGMEPHRAAGPLQLRFSPYVFNGGTILAIAGEDFAIVASDTRLSEGFSIHTRDSPKCYKLTDKTVIGCSGFHGDCLTLTKIIEARLKMYKHSNNKAMTTGAIAAMLSTILYSRRFFPYYVYNIIGGLDEEGKGAVYSFDPVGSYQRDSFKAGGSASAMLQPLLDNQVGFKNMQNVEHVPLSLDRAMRLVKDVFISAAERDVYTGDALRICIVTKEGIREETVSLRKD.

M1 is modified (N-acetylmethionine). A propeptide spanning residues 1 to 28 (MLSSTAMYSAPGRDLGMEPHRAAGPLQL) is cleaved from the precursor. S58 carries O-linked (GlcNAc) serine glycosylation. Residues S62 and S68 each carry the phosphoserine modification. Y150 carries the phosphotyrosine modification. A Phosphoserine modification is found at S162. K204 carries the post-translational modification N6-acetyllysine. The O-linked (GlcNAc) serine glycan is linked to S209.

It belongs to the peptidase T1B family. In terms of assembly, the 26S proteasome consists of a 20S proteasome core and two 19S regulatory subunits. The 20S proteasome core is a barrel-shaped complex made of 28 subunits that are arranged in four stacked rings. The two outer rings are each formed by seven alpha subunits, and the two inner rings are formed by seven beta subunits. The proteolytic activity is exerted by three beta-subunits PSMB5, PSMB6 and PSMB7. Interacts with SERPINB2. Interacts with RFPL4A. As to quaternary structure, (Microbial infection) Interacts with HIV-1 protein Tat.

It is found in the cytoplasm. The protein localises to the nucleus. Functionally, non-catalytic component of the 20S core proteasome complex involved in the proteolytic degradation of most intracellular proteins. This complex plays numerous essential roles within the cell by associating with different regulatory particles. Associated with two 19S regulatory particles, forms the 26S proteasome and thus participates in the ATP-dependent degradation of ubiquitinated proteins. The 26S proteasome plays a key role in the maintenance of protein homeostasis by removing misfolded or damaged proteins that could impair cellular functions, and by removing proteins whose functions are no longer required. Associated with the PA200 or PA28, the 20S proteasome mediates ubiquitin-independent protein degradation. This type of proteolysis is required in several pathways including spermatogenesis (20S-PA200 complex) or generation of a subset of MHC class I-presented antigenic peptides (20S-PA28 complex). The protein is Proteasome subunit beta type-1 of Homo sapiens (Human).